Consider the following 409-residue polypeptide: Arginine deiminase (409 aa).

The active-site Amidino-cysteine intermediate is the cysteine 399.

It belongs to the arginine deiminase family.

Its subcellular location is the cytoplasm. It carries out the reaction L-arginine + H2O = L-citrulline + NH4(+). Its pathway is amino-acid degradation; L-arginine degradation via ADI pathway; carbamoyl phosphate from L-arginine: step 1/2. The protein is Arginine deiminase of Streptococcus pneumoniae (strain P1031).